Consider the following 1430-residue polypeptide: FYVE, RhoGEF and PH domain-containing protein 6 (1430 aa).

Positions 1-36 (MTSAAEIKKPPVAPKPKFVVANNKPAPPPIAPKPDI) are disordered. Residues 15-24 (KPKFVVANNK) are compositionally biased toward low complexity. Ser-231 is subject to Phosphoserine. The tract at residues 330–351 (CVDTPSESTEEPGNSDSSSSCL) is disordered. A compositionally biased stretch (polar residues) spans 334 to 351 (PSESTEEPGNSDSSSSCL). The residue at position 515 (Ser-515) is a Phosphoserine. Residues 516–538 (EELLEKSSYPSSEEKSSEKSLER) are disordered. Residues 527-538 (SEEKSSEKSLER) show a composition bias toward basic and acidic residues. Phosphoserine is present on residues Ser-554, Ser-605, Ser-692, and Ser-721. Disordered stretches follow at residues 695–739 (NYSL…PYKS) and 800–869 (PDGQ…NGMK). The span at 728 to 739 (SRESSSQAPYKS) shows a compositional bias: polar residues. Over residues 831–847 (PSDEEEIINSSDEDDVS) the composition is skewed to acidic residues. Residues 851–868 (SKGEPDPLEDKQDEDNGM) are compositionally biased toward basic and acidic residues. Residues 871–1060 (KVHHIAKEIM…IEVANHANDT (190 aa)) form the DH domain. Residues 1089–1183 (VFLKEGILMK…WLEAISRAIE (95 aa)) form the PH 1 domain. Ser-1197 carries the post-translational modification Phosphoserine. The segment at 1222–1281 (DTRATMCMICTSEFTLTWRRHHCRACGKIVCQACSSNKYGLDYLKNQPARVCEHCFQELQ) adopts an FYVE-type zinc-finger fold. 8 residues coordinate Zn(2+): Cys-1228, Cys-1231, Cys-1244, Cys-1247, Cys-1252, Cys-1255, Cys-1273, and Cys-1276. A PH 2 domain is found at 1333 to 1429 (DSSMSGYLYR…WIEAFQEGTI (97 aa)).

The protein localises to the cytoplasm. It is found in the cytoskeleton. May activate CDC42, a member of the Ras-like family of Rho- and Rac proteins, by exchanging bound GDP for free GTP. May play a role in regulating the actin cytoskeleton and cell shape. The sequence is that of FYVE, RhoGEF and PH domain-containing protein 6 (FGD6) from Homo sapiens (Human).